The chain runs to 196 residues: MKVGVIGLQGDVSEHIDATNLALKKLGVSGEAIWLKKPEQLKEVSAIIIPGGESTTISRLMQKTGLFEPVKKLIEDGLPVMGTCAGLIMLSREVLGATPEQRFLEVLDVRVNRNAYGRQVDSFEAPVRLSFDDEPFIGVFIRAPRIVELLSDRVKPLAWLEDRVVGVEQDNIIGLEFHPELTDDTRVHEYFLKKAL.

Gly-52–Ser-54 contacts L-glutamine. The Nucleophile role is filled by Cys-84. L-glutamine is bound by residues Arg-113 and Ile-141–Arg-142. Catalysis depends on charge relay system residues His-178 and Glu-180.

It belongs to the glutaminase PdxT/SNO family. In the presence of PdxS, forms a dodecamer of heterodimers. Only shows activity in the heterodimer.

The enzyme catalyses aldehydo-D-ribose 5-phosphate + D-glyceraldehyde 3-phosphate + L-glutamine = pyridoxal 5'-phosphate + L-glutamate + phosphate + 3 H2O + H(+). It carries out the reaction L-glutamine + H2O = L-glutamate + NH4(+). It participates in cofactor biosynthesis; pyridoxal 5'-phosphate biosynthesis. Functionally, catalyzes the hydrolysis of glutamine to glutamate and ammonia as part of the biosynthesis of pyridoxal 5'-phosphate. The resulting ammonia molecule is channeled to the active site of PdxS. The sequence is that of Pyridoxal 5'-phosphate synthase subunit PdxT from Pyrococcus abyssi (strain GE5 / Orsay).